The following is a 154-amino-acid chain: 6,7-dimethyl-8-ribityllumazine synthase (154 aa).

Residues Phe-26, 60–62 (ALE), and 84–86 (CII) contribute to the 5-amino-6-(D-ribitylamino)uracil site. 89–90 (ET) is a (2S)-2-hydroxy-3-oxobutyl phosphate binding site. His-92 functions as the Proton donor in the catalytic mechanism. Asn-117 contributes to the 5-amino-6-(D-ribitylamino)uracil binding site. Arg-131 provides a ligand contact to (2S)-2-hydroxy-3-oxobutyl phosphate.

The protein belongs to the DMRL synthase family.

The enzyme catalyses (2S)-2-hydroxy-3-oxobutyl phosphate + 5-amino-6-(D-ribitylamino)uracil = 6,7-dimethyl-8-(1-D-ribityl)lumazine + phosphate + 2 H2O + H(+). The protein operates within cofactor biosynthesis; riboflavin biosynthesis; riboflavin from 2-hydroxy-3-oxobutyl phosphate and 5-amino-6-(D-ribitylamino)uracil: step 1/2. Its function is as follows. Catalyzes the formation of 6,7-dimethyl-8-ribityllumazine by condensation of 5-amino-6-(D-ribitylamino)uracil with 3,4-dihydroxy-2-butanone 4-phosphate. This is the penultimate step in the biosynthesis of riboflavin. The protein is 6,7-dimethyl-8-ribityllumazine synthase of Acidovorax sp. (strain JS42).